The chain runs to 424 residues: 5-methylthioadenosine/S-adenosylhomocysteine deaminase (424 aa).

2 residues coordinate Zn(2+): histidine 60 and histidine 62. Substrate-binding residues include glutamate 89 and histidine 181. Histidine 208 provides a ligand contact to Zn(2+). The substrate site is built by glutamate 211 and aspartate 296. Zn(2+) is bound at residue aspartate 296.

Belongs to the metallo-dependent hydrolases superfamily. MTA/SAH deaminase family. Zn(2+) serves as cofactor.

It carries out the reaction S-adenosyl-L-homocysteine + H2O + H(+) = S-inosyl-L-homocysteine + NH4(+). The enzyme catalyses S-methyl-5'-thioadenosine + H2O + H(+) = S-methyl-5'-thioinosine + NH4(+). Catalyzes the deamination of 5-methylthioadenosine and S-adenosyl-L-homocysteine into 5-methylthioinosine and S-inosyl-L-homocysteine, respectively. Is also able to deaminate adenosine. The chain is 5-methylthioadenosine/S-adenosylhomocysteine deaminase from Thermococcus onnurineus (strain NA1).